We begin with the raw amino-acid sequence, 578 residues long: Zinc finger-containing ubiquitin peptidase 1 (578 aa).

A C2H2-type 1 zinc finger spans residues 2–24; it reads LSCDICGETVTSEPDMKAHLIVH. The C2H2-type 2; atypical zinc-finger motif lies at 29-52; sequence IVCPFCKLSGVSYDEMCFHIETAH. 2 consecutive C2H2-type zinc fingers follow at residues 154 to 177 and 193 to 215; these read PECPFCGKIEEHSEDMETHVKTTH and YDCPMCGLICTNYHILQEHVDLH. The interval 226–248 is MIU; the sequence is DRVQCSGDLQLAHQLQQEEDRKR. The tract at residues 249–274 is zUBD/ZHA; the sequence is RSEESRQEIEEFQKLQRQYGLDNSGG. K262 is subject to N6-acetyllysine. C360 functions as the Nucleophile in the catalytic mechanism. Residue H491 is the Proton acceptor of the active site. The active site involves D512.

This sequence belongs to the peptidase C78 family. ZUFSP subfamily. In terms of assembly, interacts with RPA1 and RPA2.

Its subcellular location is the cytoplasm. The protein localises to the nucleus. It catalyses the reaction Thiol-dependent hydrolysis of ester, thioester, amide, peptide and isopeptide bonds formed by the C-terminal Gly of ubiquitin (a 76-residue protein attached to proteins as an intracellular targeting signal).. Functionally, deubiquitinase with endodeubiquitinase activity that specifically interacts with and cleaves 'Lys-63'-linked long polyubiquitin chains. Shows only weak activity against 'Lys-11' and 'Lys-48'-linked chains. Plays an important role in genome stability pathways, functioning to prevent spontaneous DNA damage and also promote cellular survival in response to exogenous DNA damage. Modulates the ubiquitination status of replication protein A (RPA) complex proteins in response to replication stress. The polypeptide is Zinc finger-containing ubiquitin peptidase 1 (Macaca fascicularis (Crab-eating macaque)).